The sequence spans 100 residues: UPF0045 protein MJ1052 (100 aa).

It belongs to the UPF0045 family.

The sequence is that of UPF0045 protein MJ1052 from Methanocaldococcus jannaschii (strain ATCC 43067 / DSM 2661 / JAL-1 / JCM 10045 / NBRC 100440) (Methanococcus jannaschii).